We begin with the raw amino-acid sequence, 248 residues long: Regulator of G-protein signaling 7-binding protein A (248 aa).

Positions 1 to 32 (MSSAPNGRKNRPRTAGTIFQIGGKAPSRESER) are disordered. Residues cysteine 243 and cysteine 244 are each lipidated (S-palmitoyl cysteine).

Belongs to the RGS7BP/RGS9BP family. In terms of processing, palmitoylated. Undergoes rapid palmitoylation turnover. Palmitoylation regulates the cell membrane and nuclear shuttling and the regulation of GPCR signaling. Upon depalmitoylation, it is targeted from the plasma membrane into the nucleus. GPCR signaling inhibits depalmitoylation and promotes localization to the plasma membrane.

It is found in the nucleus. It localises to the cytoplasm. The protein localises to the cell membrane. Functionally, regulator of G protein-coupled receptor (GPCR) signaling. Regulatory subunit of the R7-Gbeta5 complexes that acts by controlling the subcellular location of the R7-Gbeta5 complexes. When palmitoylated, it targets the R7-Gbeta5 complexes to the plasma membrane, leading to inhibit G protein alpha subunits. When it is unpalmitoylated, the R7-Gbeta5 complexes undergo a nuclear/cytoplasmic shuttling. In Danio rerio (Zebrafish), this protein is Regulator of G-protein signaling 7-binding protein A (rgs7bpa).